We begin with the raw amino-acid sequence, 314 residues long: Regulator of microtubule dynamics protein 1 (314 aa).

Residue lysine 165 is modified to N6-succinyllysine. TPR repeat units lie at residues 168-204 (AICL…NPKD) and 222-258 (PWYQ…DPNF).

Belongs to the RMDN family. Interacts with microtubules.

The protein localises to the cytoplasm. Its subcellular location is the cytoskeleton. It localises to the spindle. The protein resides in the spindle pole. This chain is Regulator of microtubule dynamics protein 1 (RMDN1), found in Pongo abelii (Sumatran orangutan).